The chain runs to 383 residues: tRNA-specific 2-thiouridylase MnmA (383 aa).

Residues 29-36 and Met-55 contribute to the ATP site; that span reads GMSGGVDS. Residues 115–117 are interaction with target base in tRNA; that stretch reads NPD. Catalysis depends on Cys-120, which acts as the Nucleophile. A disulfide bond links Cys-120 and Cys-217. ATP is bound at residue Gly-145. Residues 167-169 are interaction with tRNA; that stretch reads KDQ. The Cysteine persulfide intermediate role is filled by Cys-217. Positions 329-330 are interaction with tRNA; it reads RY.

Belongs to the MnmA/TRMU family.

The protein resides in the cytoplasm. The catalysed reaction is S-sulfanyl-L-cysteinyl-[protein] + uridine(34) in tRNA + AH2 + ATP = 2-thiouridine(34) in tRNA + L-cysteinyl-[protein] + A + AMP + diphosphate + H(+). In terms of biological role, catalyzes the 2-thiolation of uridine at the wobble position (U34) of tRNA, leading to the formation of s(2)U34. The chain is tRNA-specific 2-thiouridylase MnmA from Histophilus somni (strain 2336) (Haemophilus somnus).